Here is a 335-residue protein sequence, read N- to C-terminus: Fructose-1,6-bisphosphatase class 1 (335 aa).

Residues Glu-93, Asp-117, Leu-119, and Asp-120 each contribute to the Mg(2+) site. Residues 120 to 123 (DGSS), Asn-213, Tyr-244, and Lys-274 contribute to the substrate site. Glu-280 contacts Mg(2+).

The protein belongs to the FBPase class 1 family. As to quaternary structure, homotetramer. Mg(2+) serves as cofactor.

The protein localises to the cytoplasm. The catalysed reaction is beta-D-fructose 1,6-bisphosphate + H2O = beta-D-fructose 6-phosphate + phosphate. Its pathway is carbohydrate biosynthesis; gluconeogenesis. The chain is Fructose-1,6-bisphosphatase class 1 from Flavobacterium psychrophilum (strain ATCC 49511 / DSM 21280 / CIP 103535 / JIP02/86).